Reading from the N-terminus, the 714-residue chain is MATTTPERVMQETMDYHALNAMLNLYDKAGHIQFDKDQQAIDAFFATHVRPHSVTFASQHERLGTLVREGYYDDAVLARYDRAFVLRLFEHAHASGFRFQTFLGAWKFYTSYTLKTFDGKRYLEHFEDRVTMVALTLAQGDETLATQLTDEMLSGRFQPATPTFLNCGKQQRGELVSCFLLRIEDNMESIGRAVNSALQLSKRGGGVAFLLSNLREAGAPIKRIENQSSGVIPVMKMLEDAFSYANQLGARQGAGAVYLHAHHPDILRFLDTKRENADEKIRIKTLSLGVVIPDITFRLAKENAQMALFSPYDIQRRYGKPFGDIAISERYDELIADPHVRKTYINARDFFQTLAEIQFESGYPYIMFEDTVNRANPIAGRINMSNLCSEILQVNSASRYDDNLDYTHIGHDISCNLGSLNIAHVMDSPDIGRTVETAIRGLTAVSDMSHIRSVPSIAAGNAASHAIGLGQMNLHGYLAREGIAYGSPEALDFTNLYFYTITWHAVHTSMRLARERGKTFAGFAQSRYASGDYFTQYLQDDWQPKTAKVRALFARSGITLPTREMWLKLRDDVMRYGIYNQNLQAVPPTGSISYINHATSSIHPIVAKIEIRKEGKTGRVYYPAPFMTNENLDMYQDAYDIGPEKIIDTYAEATRHVDQGLSLTLFFPDTATTRDINKAQIYAWRKGIKSLYYIRLRQLALEGTEIEGCVSCAL.

Residues threonine 161, 177–178, glycine 206, 386–390, and 588–592 contribute to the substrate site; these read SC, NLCSE, and PTGSI. A disulfide bridge connects residues cysteine 178 and cysteine 415. Asparagine 386 acts as the Proton acceptor in catalysis. Cysteine 388 serves as the catalytic Cysteine radical intermediate. The active-site Proton acceptor is glutamate 390.

This sequence belongs to the ribonucleoside diphosphate reductase large chain family. Tetramer of two alpha and two beta subunits.

It catalyses the reaction a 2'-deoxyribonucleoside 5'-diphosphate + [thioredoxin]-disulfide + H2O = a ribonucleoside 5'-diphosphate + [thioredoxin]-dithiol. With respect to regulation, under complex allosteric control mediated by deoxynucleoside triphosphates and ATP binding. The type of nucleotide bound at the specificity site determines substrate preference. It seems probable that ATP makes the enzyme reduce CDP and UDP, dGTP favors ADP reduction and dTTP favors GDP reduction. Lacks the N-terminal activity site. Functionally, provides the precursors necessary for DNA synthesis. Catalyzes the biosynthesis of deoxyribonucleotides from the corresponding ribonucleotides. R1E contains the binding sites for both substrates and allosteric effectors and carries out the actual reduction of the ribonucleotide. This Salmonella typhimurium (strain LT2 / SGSC1412 / ATCC 700720) protein is Ribonucleoside-diphosphate reductase 2 subunit alpha (nrdE).